Reading from the N-terminus, the 140-residue chain is FAD synthase (140 aa).

ATP contacts are provided by residues 9–10 (TF), 14–17 (HPGH), N92, and Y119.

This sequence belongs to the archaeal FAD synthase family. As to quaternary structure, homodimer. Requires a divalent metal cation as cofactor.

The catalysed reaction is FMN + ATP + H(+) = FAD + diphosphate. The protein operates within cofactor biosynthesis; FAD biosynthesis; FAD from FMN: step 1/1. In terms of biological role, catalyzes the transfer of the AMP portion of ATP to flavin mononucleotide (FMN) to produce flavin adenine dinucleotide (FAD) coenzyme. This is FAD synthase from Methanocorpusculum labreanum (strain ATCC 43576 / DSM 4855 / Z).